Here is a 384-residue protein sequence, read N- to C-terminus: Spermidine/putrescine import ATP-binding protein PotA (384 aa).

One can recognise an ABC transporter domain in the interval I6–I238. G40 to S47 is a binding site for ATP.

This sequence belongs to the ABC transporter superfamily. Spermidine/putrescine importer (TC 3.A.1.11.1) family. As to quaternary structure, the complex is composed of two ATP-binding proteins (PotA), two transmembrane proteins (PotB and PotC) and a solute-binding protein (PotD).

Its subcellular location is the cell membrane. The catalysed reaction is ATP + H2O + polyamine-[polyamine-binding protein]Side 1 = ADP + phosphate + polyamineSide 2 + [polyamine-binding protein]Side 1.. Functionally, part of the ABC transporter complex PotABCD involved in spermidine/putrescine import. Responsible for energy coupling to the transport system. The sequence is that of Spermidine/putrescine import ATP-binding protein PotA from Streptococcus thermophilus (strain ATCC BAA-250 / LMG 18311).